A 373-amino-acid polypeptide reads, in one-letter code: MPAKTVSHLNFETSISTETVPASPYIPGSGNVFAKFVDAISQTGWELWYFDGVSKDDQSAISIGINRSARGLEHGGFTVQIFAIWPDGHTWHRDLYFPESTVTSEDGHITGLWEDAGSGGKVSFSVTRDCSLTMLTFAVPGVVDGTMHLETLPGDSGLETNPELGPRAHIVRPKGRASVKAELSLSSGDNSASERFVLGPSANGGMDRIWTLDTWPKVMTESYYLRAQVGPYAMQITRLFSEAESGCKPYTMARLYRDGKLICAANQVLTYEEQDFSKDSLILSKRYDASSEDVVTGAYRDKNIGYVVEFVAKGTDGQRWMFQVDHERIFWSYPTSAPGPEGTGNTGFIESVIGGADEEAYFGVGIGGQCQLS.

It belongs to the Diels-Alderase family.

It carries out the reaction (5S)-3-[(2E,6R,8E,10E,12E)-2,6-dimethyltetradeca-2,8,10,12-tetraenoyl]-5-(hydroxymethyl)pyrrolidine-2,4-dione = trichosetin. It functions in the pathway mycotoxin biosynthesis. Its function is as follows. Hybrid PKS-NRPS synthetase; part of the gene cluster that mediates the biosynthesis of trichosetin, a trans-fused decalin-containing tetramic acid with antimicrobial activity. The PKS module of PKS-NRPS1 together with the enoylreductase (ER) catalyze the formation of the polyketide unit which is then conjugated to L-serine by the condensation domain of the PKS-NRPS1 NRPS module. Activity of the Dieckmann cyclase domain (RED) results in release of the Dieckmann product intermediate. Diels-Alderase (DA) is involved in endo-selective Diels-Alder cycloaddition to form the decalin ring, leading to the production of N-desmethylequisetin also called trichosetin. The cluster does not contain the equisetin N-methyltransferase and consequently, trichosetin is isolated as final product. The polypeptide is Diels-Alderase (Gibberella fujikuroi (strain CBS 195.34 / IMI 58289 / NRRL A-6831) (Bakanae and foot rot disease fungus)).